Reading from the N-terminus, the 185-residue chain is Ribosome-recycling factor (185 aa).

The interval 142–165 (IVKDGDAGEDEGSRAEKELDGLTK) is disordered.

The protein belongs to the RRF family.

It localises to the cytoplasm. In terms of biological role, responsible for the release of ribosomes from messenger RNA at the termination of protein biosynthesis. May increase the efficiency of translation by recycling ribosomes from one round of translation to another. In Renibacterium salmoninarum (strain ATCC 33209 / DSM 20767 / JCM 11484 / NBRC 15589 / NCIMB 2235), this protein is Ribosome-recycling factor.